A 192-amino-acid polypeptide reads, in one-letter code: Protein FAM169BP (192 aa).

Residues 121-192 (YQAHPGNSED…PPGKLTRSSP (72 aa)) form a disordered region. A compositionally biased stretch (acidic residues) spans 159-177 (EELEDTKDDPECGVEEEDA).

It belongs to the FAM169 family.

This Homo sapiens (Human) protein is Protein FAM169BP.